We begin with the raw amino-acid sequence, 74 residues long: Small ribosomal subunit protein bS20c (74 aa).

It belongs to the bacterial ribosomal protein bS20 family.

The protein localises to the plastid. It localises to the chloroplast. Binds directly to 16S ribosomal RNA. This is Small ribosomal subunit protein bS20c from Cyanidioschyzon merolae (strain NIES-3377 / 10D) (Unicellular red alga).